The primary structure comprises 398 residues: Cysteine protease ATG4A (398 aa).

The Nucleophile role is filled by Cys-77. Residues Asp-279 and His-281 contribute to the active site. The LIR signature appears at 393-396 (FEIL).

Belongs to the peptidase C54 family. As to quaternary structure, interacts with ATG9A; the interaction is direct.

The protein localises to the cytoplasm. The catalysed reaction is [protein]-C-terminal L-amino acid-glycyl-phosphatidylethanolamide + H2O = [protein]-C-terminal L-amino acid-glycine + a 1,2-diacyl-sn-glycero-3-phosphoethanolamine. Its activity is regulated as follows. Inhibited by N-ethylmaleimide. Redox-regulated during autophagy since reducing conditions activate ATG4A whereas an oxidizing environment such as the presence of H(2)O(2) inhibits its activity. Cysteine protease that plays a key role in autophagy by mediating both proteolytic activation and delipidation of ATG8 family proteins. The protease activity is required for proteolytic activation of ATG8 family proteins: cleaves the C-terminal amino acid of ATG8 proteins to reveal a C-terminal glycine. Exposure of the glycine at the C-terminus is essential for ATG8 proteins conjugation to phosphatidylethanolamine (PE) and insertion to membranes, which is necessary for autophagy. Preferred substrate is GABARAPL2 followed by MAP1LC3A and GABARAP. Protease activity is also required to counteract formation of high-molecular weight conjugates of ATG8 proteins (ATG8ylation): acts as a deubiquitinating-like enzyme that removes ATG8 conjugated to other proteins, such as ATG3. In addition to the protease activity, also mediates delipidation of ATG8 family proteins. Catalyzes delipidation of PE-conjugated forms of ATG8 proteins during macroautophagy. Compared to ATG4B, the major protein for proteolytic activation of ATG8 proteins, shows weaker ability to cleave the C-terminal amino acid of ATG8 proteins, while it displays stronger delipidation activity. Involved in phagophore growth during mitophagy independently of its protease activity and of ATG8 proteins: acts by regulating ATG9A trafficking to mitochondria and promoting phagophore-endoplasmic reticulum contacts during the lipid transfer phase of mitophagy. In Homo sapiens (Human), this protein is Cysteine protease ATG4A.